Reading from the N-terminus, the 175-residue chain is Adenine phosphoribosyltransferase (175 aa).

It belongs to the purine/pyrimidine phosphoribosyltransferase family. As to quaternary structure, homodimer.

The protein resides in the cytoplasm. It carries out the reaction AMP + diphosphate = 5-phospho-alpha-D-ribose 1-diphosphate + adenine. It participates in purine metabolism; AMP biosynthesis via salvage pathway; AMP from adenine: step 1/1. Functionally, catalyzes a salvage reaction resulting in the formation of AMP, that is energically less costly than de novo synthesis. The chain is Adenine phosphoribosyltransferase from Lactobacillus delbrueckii subsp. bulgaricus (strain ATCC 11842 / DSM 20081 / BCRC 10696 / JCM 1002 / NBRC 13953 / NCIMB 11778 / NCTC 12712 / WDCM 00102 / Lb 14).